The following is a 250-amino-acid chain: NADH-quinone oxidoreductase subunit B 2 (250 aa).

Residues Cys41, Cys42, Cys107, and Cys137 each coordinate [4Fe-4S] cluster.

This sequence belongs to the complex I 20 kDa subunit family. As to quaternary structure, NDH-1 is composed of 14 different subunits. Subunits NuoB, C, D, E, F, and G constitute the peripheral sector of the complex. The cofactor is [4Fe-4S] cluster.

Its subcellular location is the cell membrane. It catalyses the reaction a quinone + NADH + 5 H(+)(in) = a quinol + NAD(+) + 4 H(+)(out). NDH-1 shuttles electrons from NADH, via FMN and iron-sulfur (Fe-S) centers, to quinones in the respiratory chain. The immediate electron acceptor for the enzyme in this species is believed to be ubiquinone. Couples the redox reaction to proton translocation (for every two electrons transferred, four hydrogen ions are translocated across the cytoplasmic membrane), and thus conserves the redox energy in a proton gradient. The polypeptide is NADH-quinone oxidoreductase subunit B 2 (Herpetosiphon aurantiacus (strain ATCC 23779 / DSM 785 / 114-95)).